Reading from the N-terminus, the 325-residue chain is Acetyl-coenzyme A carboxylase carboxyl transferase subunit alpha (325 aa).

The CoA carboxyltransferase C-terminal domain occupies 38 to 292 (RLEDRLAKLQ…DETLKQSLKT (255 aa)).

This sequence belongs to the AccA family. In terms of assembly, acetyl-CoA carboxylase is a heterohexamer composed of biotin carboxyl carrier protein (AccB), biotin carboxylase (AccC) and two subunits each of ACCase subunit alpha (AccA) and ACCase subunit beta (AccD).

It localises to the cytoplasm. It carries out the reaction N(6)-carboxybiotinyl-L-lysyl-[protein] + acetyl-CoA = N(6)-biotinyl-L-lysyl-[protein] + malonyl-CoA. It participates in lipid metabolism; malonyl-CoA biosynthesis; malonyl-CoA from acetyl-CoA: step 1/1. Inhibited by pyrrolidine dione antibiotics moiramide B (CPD1) and CPD2. Its function is as follows. Component of the acetyl coenzyme A carboxylase (ACC) complex. First, biotin carboxylase catalyzes the carboxylation of biotin on its carrier protein (BCCP) and then the CO(2) group is transferred by the carboxyltransferase to acetyl-CoA to form malonyl-CoA. This is Acetyl-coenzyme A carboxylase carboxyl transferase subunit alpha from Bacillus subtilis (strain 168).